Consider the following 170-residue polypeptide: Der GTPase-activating protein YihI (170 aa).

Disordered stretches follow at residues Met-1–Gln-96 and Leu-145–Asn-170. Over residues Thr-20–Asp-30 the composition is skewed to basic and acidic residues. Over residues Arg-31–His-40 the composition is skewed to basic residues. Acidic residues predominate over residues Tyr-147–Gln-159.

The protein belongs to the YihI family. Interacts with Der.

A GTPase-activating protein (GAP) that modifies Der/EngA GTPase function. May play a role in ribosome biogenesis. The sequence is that of Der GTPase-activating protein YihI from Salmonella arizonae (strain ATCC BAA-731 / CDC346-86 / RSK2980).